A 128-amino-acid polypeptide reads, in one-letter code: Small ribosomal subunit protein uS11 (128 aa).

This sequence belongs to the universal ribosomal protein uS11 family. In terms of assembly, part of the 30S ribosomal subunit. Interacts with proteins S7 and S18. Binds to IF-3.

Its function is as follows. Located on the platform of the 30S subunit, it bridges several disparate RNA helices of the 16S rRNA. Forms part of the Shine-Dalgarno cleft in the 70S ribosome. The sequence is that of Small ribosomal subunit protein uS11 from Chromohalobacter salexigens (strain ATCC BAA-138 / DSM 3043 / CIP 106854 / NCIMB 13768 / 1H11).